A 662-amino-acid polypeptide reads, in one-letter code: Interferon-induced GTP-binding protein Mx1 (662 aa).

Residue Met-1 is modified to N-acetylmethionine; in Interferon-induced GTP-binding protein Mx1; alternate. The region spanning 67 to 340 (DLALPAIAVI…LITHICKSLP (274 aa)) is the Dynamin-type G domain. The tract at residues 77–84 (GDQSSGKS) is G1 motif. 77-84 (GDQSSGKS) contributes to the GTP binding site. Residues 102–104 (VTR) form a G2 motif region. Residues 178 to 181 (DLPG) are G3 motif. GTP contacts are provided by residues 178–182 (DLPGI) and 247–250 (TKPD). Residues 247–250 (TKPD) are G4 motif. The tract at residues 279 to 282 (KCRG) is G5 motif. A bundle signaling element (BSE) region spans residues 341-366 (LLENQIKETHQRITEELQKYGVDIPE). The middle domain stretch occupies residues 366 to 533 (EDENEKMFFL…HFQMEQIVYC (168 aa)). The tract at residues 367-632 (DENEKMFFLI…KDTYSWLLKE (266 aa)) is stalk. Positions 554 to 557 (KKKK) are critical for lipid-binding. The 89-residue stretch at 574–662 (MEEIFQHLMA…ARRRLAQFPG (89 aa)) folds into the GED domain.

The protein belongs to the TRAFAC class dynamin-like GTPase superfamily. Dynamin/Fzo/YdjA family. Homotetramer. Oligomerizes into multimeric filamentous or ring-like structures by virtue of its stalk domain. Oligomerization is critical for GTPase activity, protein stability, and recognition of viral target structures. Interacts with TRPC1, TRPC3, TRPC4, TRPC5, TRPC6 and TRPC7. Interacts with HSPA5. Interacts with DDX39A and DDX39B. Interacts with TUBB/TUBB5. The GTP-bound form interacts (via C-terminus) with THOV P5 protein. The GTP-bound form interacts with LACV protein N. Interacts with CCHFV protein N. ISGylated.

Its subcellular location is the cytoplasm. The protein resides in the endoplasmic reticulum membrane. It is found in the perinuclear region. The protein localises to the nucleus. Interferon-induced dynamin-like GTPase with antiviral activity against a wide range of RNA viruses and some DNA viruses. Its target viruses include negative-stranded RNA viruses and HBV through binding and inactivation of their ribonucleocapsid. May also antagonize reoviridae and asfarviridae replication. Inhibits thogoto virus (THOV) replication by preventing the nuclear import of viral nucleocapsids. Inhibits La Crosse virus (LACV) replication by sequestering viral nucleoprotein in perinuclear complexes, preventing genome amplification, budding, and egress. Inhibits influenza A virus (IAV) replication by decreasing or delaying NP synthesis and by blocking endocytic traffic of incoming virus particles. Enhances ER stress-mediated cell death after influenza virus infection. May regulate the calcium channel activity of TRPCs. The protein is Interferon-induced GTP-binding protein Mx1 (MX1) of Homo sapiens (Human).